The primary structure comprises 598 residues: NADH-quinone oxidoreductase subunit C/D (598 aa).

Residues 1 to 190 (MSIFTQEVSA…EAFSLDDERL (190 aa)) are NADH dehydrogenase I subunit C. The interval 214–598 (DYLFLNLGPN…IDFVMADVDR (385 aa)) is NADH dehydrogenase I subunit D.

It in the N-terminal section; belongs to the complex I 30 kDa subunit family. This sequence in the C-terminal section; belongs to the complex I 49 kDa subunit family. NDH-1 is composed of 13 different subunits. Subunits NuoB, CD, E, F, and G constitute the peripheral sector of the complex.

Its subcellular location is the cell inner membrane. It catalyses the reaction a quinone + NADH + 5 H(+)(in) = a quinol + NAD(+) + 4 H(+)(out). Functionally, NDH-1 shuttles electrons from NADH, via FMN and iron-sulfur (Fe-S) centers, to quinones in the respiratory chain. The immediate electron acceptor for the enzyme in this species is believed to be ubiquinone. Couples the redox reaction to proton translocation (for every two electrons transferred, four hydrogen ions are translocated across the cytoplasmic membrane), and thus conserves the redox energy in a proton gradient. This is NADH-quinone oxidoreductase subunit C/D from Shewanella woodyi (strain ATCC 51908 / MS32).